Consider the following 436-residue polypeptide: Glutamyl-tRNA reductase (436 aa).

Residues 49–52 (TCNR), S109, 114–116 (EPQ), and Q120 each bind substrate. Residue C50 is the Nucleophile of the active site. NADP(+) is bound at residue 189-194 (GAGEMC).

Belongs to the glutamyl-tRNA reductase family. In terms of assembly, homodimer.

It catalyses the reaction (S)-4-amino-5-oxopentanoate + tRNA(Glu) + NADP(+) = L-glutamyl-tRNA(Glu) + NADPH + H(+). The protein operates within porphyrin-containing compound metabolism; protoporphyrin-IX biosynthesis; 5-aminolevulinate from L-glutamyl-tRNA(Glu): step 1/2. Catalyzes the NADPH-dependent reduction of glutamyl-tRNA(Glu) to glutamate 1-semialdehyde (GSA). In Pelobacter propionicus (strain DSM 2379 / NBRC 103807 / OttBd1), this protein is Glutamyl-tRNA reductase.